Reading from the N-terminus, the 251-residue chain is Triosephosphate isomerase (251 aa).

12 to 14 is a substrate binding site; it reads NWK. The Electrophile role is filled by His98. The active-site Proton acceptor is the Glu168. Substrate contacts are provided by residues Gly174, Ser213, and 234–235; that span reads GG.

The protein belongs to the triosephosphate isomerase family. As to quaternary structure, homodimer.

The protein resides in the cytoplasm. The enzyme catalyses D-glyceraldehyde 3-phosphate = dihydroxyacetone phosphate. The protein operates within carbohydrate biosynthesis; gluconeogenesis. It participates in carbohydrate degradation; glycolysis; D-glyceraldehyde 3-phosphate from glycerone phosphate: step 1/1. Its function is as follows. Involved in the gluconeogenesis. Catalyzes stereospecifically the conversion of dihydroxyacetone phosphate (DHAP) to D-glyceraldehyde-3-phosphate (G3P). The sequence is that of Triosephosphate isomerase from Afipia carboxidovorans (strain ATCC 49405 / DSM 1227 / KCTC 32145 / OM5) (Oligotropha carboxidovorans).